A 312-amino-acid chain; its full sequence is Ribonuclease Z (312 aa).

His-63, His-65, Asp-67, His-68, His-141, Asp-212, and His-270 together coordinate Zn(2+). The active-site Proton acceptor is the Asp-67.

This sequence belongs to the RNase Z family. As to quaternary structure, homodimer. It depends on Zn(2+) as a cofactor.

The enzyme catalyses Endonucleolytic cleavage of RNA, removing extra 3' nucleotides from tRNA precursor, generating 3' termini of tRNAs. A 3'-hydroxy group is left at the tRNA terminus and a 5'-phosphoryl group is left at the trailer molecule.. Functionally, zinc phosphodiesterase, which displays some tRNA 3'-processing endonuclease activity. Probably involved in tRNA maturation, by removing a 3'-trailer from precursor tRNA. This chain is Ribonuclease Z, found in Latilactobacillus sakei subsp. sakei (strain 23K) (Lactobacillus sakei subsp. sakei).